Reading from the N-terminus, the 387-residue chain is Adaptive-response sensory kinase SasA (387 aa).

The interacts with KaiC stretch occupies residues 1-97 (MGESLSPQAL…TDQLANQLPQ (97 aa)). Positions 158–382 (LVAHDLRNPL…TFHFTMPVYR (225 aa)) constitute a Histidine kinase domain. His-161 carries the phosphohistidine; by autocatalysis modification.

Homooligomerizes. Part of the circadian clock (KaiA, KaiB, KaiC, CikA, RpaA, SasA), the composition of which varies during the circadian cycle. Binds to the CI domain of KaiC; KaiB(fs) and SasA compete for the binding site. Binds preferentially to doubly phosphorylated KaiC. Interacts with LdpA. Autophosphorylates in vitro.

It carries out the reaction ATP + protein L-histidine = ADP + protein N-phospho-L-histidine.. Its function is as follows. Member of the two-component regulatory system SasA/RpaA involved in genome-wide circadian gene expression. One of three clock output pathways. Participates in the KaiABC clock protein complex, which constitutes the main circadian regulator in cyanobacteria, via its interaction with KaiC. Required for robustness of the circadian rhythm of gene expression and involved in clock output. KaiC enhances the autophosphorylation activity of SasA, which then transfers its phosphate group to RpaA to activate it. Phosphotransfer is maximal when KaiC phosphorylation is active during the circadian cycle; this two-component system is activated by fully phosphorylated KaiC. A very robust clock is reconstituted with KaiA, KaiB, KaiC, SasA, CikA and RpaA; output is measured by transcription from an appropriate reporter. In addition to its output function, recruits fold-shifted KaiB (KaiB(fs)) to KaiC to cooperatively form the KaiB(6):KaiC(6) complex (independent of SasA kinase activity); at physiological concentrations increases their association. At higher concentrations SasA and KaiB(fs) compete to bind to KaiC. Mutations that decrease cooperativity nearly phenocopy a deletion mutation. Functionally, autophosphorylation and phosphotransfer activities are not essential for clock rhythms in continuous light, but they are essential for adaptation to light/dark cycles. The protein is Adaptive-response sensory kinase SasA of Synechococcus elongatus (strain ATCC 33912 / PCC 7942 / FACHB-805) (Anacystis nidulans R2).